The chain runs to 218 residues: Large ribosomal subunit protein uL3 (218 aa).

This sequence belongs to the universal ribosomal protein uL3 family. Part of the 50S ribosomal subunit. Forms a cluster with proteins L14 and L19.

Its function is as follows. One of the primary rRNA binding proteins, it binds directly near the 3'-end of the 23S rRNA, where it nucleates assembly of the 50S subunit. The polypeptide is Large ribosomal subunit protein uL3 (Corynebacterium aurimucosum (strain ATCC 700975 / DSM 44827 / CIP 107346 / CN-1) (Corynebacterium nigricans)).